Here is a 334-residue protein sequence, read N- to C-terminus: L-lactate dehydrogenase (334 aa).

The interval 1 to 22 (MASTKGKLIHEMVPSKERDPPH) is disordered. Over residues 8–22 (LIHEMVPSKERDPPH) the composition is skewed to basic and acidic residues. NAD(+) is bound by residues 31–59 (GQVG…VEDR) and Arg101. 3 residues coordinate substrate: Arg108, Asn140, and Arg171. Asn140 is an NAD(+) binding site. The active-site Proton acceptor is His195. Thr250 is a binding site for substrate.

Belongs to the LDH/MDH superfamily. LDH family. As to quaternary structure, homotetramer.

It localises to the cytoplasm. The catalysed reaction is (S)-lactate + NAD(+) = pyruvate + NADH + H(+). It participates in fermentation; pyruvate fermentation to lactate; (S)-lactate from pyruvate: step 1/1. The polypeptide is L-lactate dehydrogenase (Petromyzon marinus (Sea lamprey)).